The chain runs to 829 residues: Genome polyprotein (829 aa).

Position 2 is an N-acetylserine; by host (serine 2). The interval 2–23 is interaction with STAT1; sequence STNPKPQRKTKRNTNRRPQDVK. The interval 2–58 is interaction with EIF2AK2/PKR; that stretch reads STNPKPQRKTKRNTNRRPQDVKFPGGGQIVGGVYLLPRRGPRLGVRATRKTSERSQP. Residues 2 to 59 are interaction with DDX3X; it reads STNPKPQRKTKRNTNRRPQDVKFPGGGQIVGGVYLLPRRGPRLGVRATRKTSERSQPR. Positions 2-75 are disordered; that stretch reads STNPKPQRKT…PKARRPKGRN (74 aa). Residues 2-168 are Cytoplasmic-facing; it reads STNPKPQRKT…EDGVNYATGN (167 aa). Short sequence motifs (nuclear localization signal) lie at residues 5 to 13 and 38 to 43; these read PKPQRKTKR and PRRGPR. Over residues 7–16 the composition is skewed to basic residues; it reads PQRKTKRNTN. Residues 32 to 47 are compositionally biased toward low complexity; that stretch reads GGVYLLPRRGPRLGVR. The residue at position 53 (serine 53) is a Phosphoserine; by host. Short sequence motifs (nuclear localization signal) lie at residues 58–64 and 66–71; these read PRGRRQP and PKARRP. The segment covering 58–73 has biased composition (basic residues); the sequence is PRGRRQPIPKARRPKG. Position 99 is a phosphoserine; by host (serine 99). The important for endoplasmic reticulum and mitochondrial localization stretch occupies residues 112 to 152; that stretch reads PRRRSRNLGKVIDTLTCGFVDLMGYIPLVGAPLRGAARALA. Phosphoserine; by host PKA is present on serine 116. The interaction with APOA2 stretch occupies residues 122–173; that stretch reads VIDTLTCGFVDLMGYIPLVGAPLRGAARALAHGVRVLEDGVNYATGNLPGCS. Residues 164–167 form an important for lipid droplets localization region; it reads YATG. Residues 169 to 189 form a helical membrane-spanning segment; the sequence is LPGCSFSIFLLALLSCLTVPA. The propeptide at 178 to 191 is ER anchor for the core protein, removed in mature form by host signal peptidase; it reads LLALLSCLTVPASA. Over 190-358 the chain is Lumenal; that stretch reads SAYQVRNSTG…AGAHWGVLAG (169 aa). 3 N-linked (GlcNAc...) asparagine; by host glycosylation sites follow: asparagine 196, asparagine 209, and asparagine 234. The important for fusion stretch occupies residues 265–296; sequence LVGSATLCSALYVGDLCGSVFLVGQLFTFSPR. A glycan (N-linked (GlcNAc...) asparagine; by host) is linked at asparagine 305. The chain crosses the membrane as a helical span at residues 359–379; it reads MAYFSMVGNWAKVLAVLLLFA. At 380–725 the chain is on the lumenal side; sequence GVDAETHVTG…WEYVVLLFLL (346 aa). Positions 385-411 are HVR1; it reads THVTGGAAARSTLQLAGLFQPGAKQNV. N-linked (GlcNAc...) (high mannose) asparagine; by host glycans are attached at residues asparagine 417, asparagine 423, asparagine 430, and asparagine 448. 4 disulfides stabilise this stretch: cysteine 429/cysteine 552, cysteine 452/cysteine 459, cysteine 486/cysteine 494, and cysteine 503/cysteine 508. The tract at residues 474–479 is HVR2; it reads YAGGGG. Residues 480–493 form a CD81-binding 1 region; the sequence is PDHRPYCWHYPPKP. A glycan (N-linked (GlcNAc...) asparagine; by host) is linked at asparagine 540. Residues 544–551 form a CD81-binding 2 region; the sequence is PPLGNWFG. An N-linked (GlcNAc...) (high mannose) asparagine; by host glycan is attached at asparagine 556. Cysteines 564 and 569 form a disulfide. Asparagine 576 carries an N-linked (GlcNAc...) (high mannose) asparagine; by host glycan. Disulfide bonds link cysteine 581–cysteine 585, cysteine 597–cysteine 620, and cysteine 607–cysteine 644. N-linked (GlcNAc...) (high mannose) asparagine; by host glycosylation is found at asparagine 623 and asparagine 645. Residues cysteine 652 and cysteine 677 are joined by a disulfide bond. The PKR/eIF2-alpha phosphorylation homology domain (PePHD) stretch occupies residues 660–671; that stretch reads SELSPLLLSTTQ. A helical membrane pass occupies residues 726 to 746; sequence LADARVCSCLWMMLLISQAEA. Over 747–757 the chain is Lumenal; the sequence is ALENLVVLNAA. A helical transmembrane segment spans residues 758–778; the sequence is SLAGTHGLVSFLVFFCFAWFL. Residues 779 to 781 are Cytoplasmic-facing; that stretch reads RGK. The helical transmembrane segment at 782 to 803 threads the bilayer; the sequence is WVPGAVYALYGMWPLLLLLLAL. Topologically, residues 804 to 813 are lumenal; sequence PQRAYALDTE. A helical membrane pass occupies residues 814–829; sequence VAASCGGVVLVGLMAL.

It belongs to the hepacivirus polyprotein family. As to quaternary structure, homooligomer. Interacts with E1 (via C-terminus). Interacts with the non-structural protein 5A. Interacts (via N-terminus) with host STAT1 (via SH2 domain); this interaction results in decreased STAT1 phosphorylation and ubiquitin-mediated proteasome-dependent STAT1 degradation, leading to decreased IFN-stimulated gene transcription. Interacts with host STAT3; this interaction constitutively activates STAT3. Interacts with host LTBR receptor. Interacts with host TNFRSF1A receptor and possibly induces apoptosis. Interacts with host HNRPK. Interacts with host YWHAE. Interacts with host UBE3A/E6AP. Interacts with host DDX3X. Interacts with host APOA2. Interacts with host RXRA protein. Interacts with host SP110 isoform 3/Sp110b; this interaction sequesters the transcriptional corepressor SP110 away from the nucleus. Interacts with host CREB3 nuclear transcription protein; this interaction triggers cell transformation. Interacts with host ACY3. Interacts with host C1QR1. Interacts with host RBM24; this interaction, which enhances the interaction of the mature core protein with 5'-UTR, may inhibit viral translation and favor replication. Interacts with host EIF2AK2/PKR; this interaction induces the autophosphorylation of EIF2AK2. Part of the viral assembly initiation complex composed of NS2, E1, E2, NS3, NS4A, NS5A and the mature core protein. Forms a heterodimer with envelope glycoprotein E2. Interacts with mature core protein. Interacts with protease NS2. The heterodimer E1/E2 interacts with host CLDN1; this interaction plays a role in viral entry into host cell. Interacts with host SPSB2 (via C-terminus). Part of the viral assembly initiation complex composed of NS2, E1, E2, NS3, NS4A, NS5A and the mature core protein. In terms of assembly, forms a heterodimer with envelope glycoprotein E1. Interacts with host CD81 and SCARB1 receptors; these interactions play a role in viral entry into host cell. Interacts with host EIF2AK2/PKR; this interaction inhibits EIF2AK2 and probably allows the virus to evade the innate immune response. Interacts with host CD209/DC-SIGN and CLEC4M/DC-SIGNR. Interact with host SPCS1; this interaction is essential for viral particle assembly. Interacts with protease NS2. The heterodimer E1/E2 interacts with host CLDN1; this interaction plays a role in viral entry into host cell. Part of the viral assembly initiation complex composed of NS2, E1, E2, NS3, NS4A, NS5A and the mature core protein. As to quaternary structure, homohexamer. Homoheptamer. Interacts with protease NS2. Homodimer. Interacts with host SPCS1; this interaction is essential for viral particle assembly. Interacts with envelope glycoprotein E1. Interacts with envelope glycoprotein E2. Interacts with viroporin p7. Interacts with serine protease/helicase NS3. Part of the replication complex composed of NS2, NS3, NS4A, NS4B, NS5A and the RNA-directed RNA polymerase embedded in an ER-derived membranous web. Part of the viral assembly initiation complex composed of NS2, E1, E2, NS3, NS4A, NS5A and the mature core protein. Zn(2+) is required as a cofactor. In terms of processing, specific enzymatic cleavages in vivo yield mature proteins. The structural proteins, core, E1, E2 and p7 are produced by proteolytic processing by host signal peptidases. The core protein precursor is synthesized as a 23 kDa, which is retained in the ER membrane through the hydrophobic signal peptide. Cleavage by the signal peptidase releases the 21 kDa mature core protein. The cleavage of the core protein precursor occurs between aminoacids 176 and 188 but the exact cleavage site is not known. Some degraded forms of the core protein appear as well during the course of infection. The other proteins (p7, NS2, NS3, NS4A, NS4B, NS5A and NS5B) are cleaved by the viral proteases. Autoprocessing between NS2 and NS3 is mediated by the NS2 cysteine protease catalytic domain and regulated by the NS3 N-terminal domain. Phosphorylated by host PKC and PKA. Post-translationally, ubiquitinated; mediated by UBE3A and leading to core protein subsequent proteasomal degradation. In terms of processing, highly N-glycosylated. Palmitoylation is required for NS2/3 autoprocessing and E2 recruitment to membranes.

Its subcellular location is the host endoplasmic reticulum membrane. It is found in the host mitochondrion membrane. The protein localises to the virion. It localises to the host cytoplasm. The protein resides in the host nucleus. Its subcellular location is the host lipid droplet. It is found in the virion membrane. The protein localises to the host mitochondrion. It localises to the host cell membrane. With respect to regulation, inhibited by the antiviral drug hexamethylene amiloride. Inhibition by amantadine appears to be genotype-dependent. Also inhibited by long-alkyl-chain iminosugar derivatives. Functionally, packages viral RNA to form a viral nucleocapsid, and promotes virion budding. Participates in the viral particle production as a result of its interaction with the non-structural protein 5A. Binds RNA and may function as a RNA chaperone to induce the RNA structural rearrangements taking place during virus replication. Modulates viral translation initiation by interacting with viral IRES and 40S ribosomal subunit. Affects various cell signaling pathways, host immunity and lipid metabolism. Prevents the establishment of cellular antiviral state by blocking the interferon-alpha/beta (IFN-alpha/beta) and IFN-gamma signaling pathways and by blocking the formation of phosphorylated STAT1 and promoting ubiquitin-mediated proteasome-dependent degradation of STAT1. Activates STAT3 leading to cellular transformation. Regulates the activity of cellular genes, including c-myc and c-fos. May repress the promoter of p53, and sequester CREB3 and SP110 isoform 3/Sp110b in the cytoplasm. Represses cell cycle negative regulating factor CDKN1A, thereby interrupting an important check point of normal cell cycle regulation. Targets transcription factors involved in the regulation of inflammatory responses and in the immune response: suppresses TNF-induced NF-kappa-B activation, and activates AP-1. Binds to dendritic cells (DCs) via C1QR1, resulting in down-regulation of T-lymphocytes proliferation. Alters lipid metabolism by interacting with hepatocellular proteins involved in lipid accumulation and storage. Induces up-regulation of FAS promoter activity, and thereby contributes to the increased triglyceride accumulation in hepatocytes (steatosis). In terms of biological role, forms a heterodimer with envelope glycoprotein E2, which mediates virus attachment to the host cell, virion internalization through clathrin-dependent endocytosis and fusion with host membrane. Fusion with the host cell is most likely mediated by both E1 and E2, through conformational rearrangements of the heterodimer required for fusion rather than a classical class II fusion mechanism. E1/E2 heterodimer binds host apolipoproteins such as APOB and ApoE thereby forming a lipo-viro-particle (LVP). APOE associated to the LVP allows the initial virus attachment to cell surface receptors such as the heparan sulfate proteoglycans (HSPGs), syndecan-1 (SDC1), syndecan-1 (SDC2), the low-density lipoprotein receptor (LDLR) and scavenger receptor class B type I (SCARB1). The cholesterol transfer activity of SCARB1 allows E2 exposure and binding of E2 to SCARB1 and the tetraspanin CD81. E1/E2 heterodimer binding on CD81 activates the epithelial growth factor receptor (EGFR) signaling pathway. Diffusion of the complex E1-E2-EGFR-SCARB1-CD81 to the cell lateral membrane allows further interaction with Claudin 1 (CLDN1) and occludin (OCLN) to finally trigger HCV entry. Forms a heterodimer with envelope glycoprotein E1, which mediates virus attachment to the host cell, virion internalization through clathrin-dependent endocytosis and fusion with host membrane. Fusion with the host cell is most likely mediated by both E1 and E2, through conformational rearrangements of the heterodimer required for fusion rather than a classical class II fusion mechanism. The interaction between envelope glycoprotein E2 and host apolipoprotein E/APOE allows the proper assembly, maturation and infectivity of the viral particles. This interaction is probably promoted via the up-regulation of cellular autophagy by the virus. E1/E2 heterodimer binds host apolipoproteins such as APOB and APOE thereby forming a lipo-viro-particle (LVP). APOE associated to the LVP allows the initial virus attachment to cell surface receptors such as the heparan sulfate proteoglycans (HSPGs), syndecan-1 (SDC1), syndecan-1 (SDC2), the low-density lipoprotein receptor (LDLR) and scavenger receptor class B type I (SCARB1). The cholesterol transfer activity of SCARB1 allows E2 exposure and binding of E2 to SCARB1 and the tetraspanin CD81. E1/E2 heterodimer binding on CD81 activates the epithelial growth factor receptor (EGFR) signaling pathway. Diffusion of the complex E1-E2-EGFR-SCARB1-CD81 to the cell lateral membrane allows further interaction with Claudin 1 (CLDN1) and occludin (OCLN) to finally trigger HCV entry. Inhibits host EIF2AK2/PKR activation, preventing the establishment of an antiviral state. Viral ligand for CD209/DC-SIGN and CLEC4M/DC-SIGNR, which are respectively found on dendritic cells (DCs), and on liver sinusoidal endothelial cells and macrophage-like cells of lymph node sinuses. These interactions allow the capture of circulating HCV particles by these cells and subsequent facilitated transmission to permissive cells such as hepatocytes and lymphocyte subpopulations. Its function is as follows. Ion channel protein that acts as a viroporin and plays an essential role in the assembly, envelopment and secretion of viral particles. Regulates the host cell secretory pathway, which induces the intracellular retention of viral glycoproteins and favors assembly of viral particles. Creates a pore in acidic organelles and releases Ca(2+) and H(+) in the cytoplasm of infected cells, leading to a productive viral infection. High levels of cytoplasmic Ca(2+) may trigger membrane trafficking and transport of viral ER-associated proteins to viroplasms, sites of viral genome replication. This ionic imbalance induces the assembly of the inflammasome complex, which triggers the maturation of pro-IL-1beta into IL-1beta through the action of caspase-1. Targets also host mitochondria and induces mitochondrial depolarization. In addition of its role as a viroporin, acts as a lipid raft adhesion factor. Functionally, cysteine protease required for the proteolytic auto-cleavage between the non-structural proteins NS2 and NS3. The N-terminus of NS3 is required for the function of NS2 protease (active region NS2-3). Promotes the initiation of viral particle assembly by mediating the interaction between structural and non-structural proteins. The protein is Genome polyprotein of Hepatitis C virus (isolate Glasgow) (HCV).